Here is a 761-residue protein sequence, read N- to C-terminus: Cytoplasmic export protein 1 (761 aa).

2 HEAT repeats span residues 385-423 (IYPH…LNNE) and 498-534 (NTIA…LEKL). Disordered regions lie at residues 660-692 (DDGW…IAPS) and 714-761 (STVT…DTNW). 2 stretches are compositionally biased toward polar residues: residues 680–692 (PQNS…IAPS) and 714–737 (STVT…SIRG). A compositionally biased stretch (acidic residues) spans 747–761 (GWDDDGDSDSWDTNW). Serine 754 carries the phosphoserine modification.

As to quaternary structure, associates with the nuclear pore complex (NPC). Interacts with GSP1, LOS1, MSN5, NUP116 and TEF2.

The protein resides in the cytoplasm. Its function is as follows. Component of the nuclear tRNA export machinery that my collect tRNA from the nuclear tRNA export receptors of the aminoacylation-dependent export and may deliver aminoacylated tRNAs to the translation machinery pathway at the nuclear pore complex. The sequence is that of Cytoplasmic export protein 1 (CEX1) from Saccharomyces cerevisiae (strain ATCC 204508 / S288c) (Baker's yeast).